The primary structure comprises 175 residues: Thioredoxin M-type, chloroplastic (175 aa).

The N-terminal 62 residues, 1-62 (MALETCLRGW…ARRPSRFVCK (62 aa)), are a transit peptide targeting the chloroplast. The Thioredoxin domain occupies 63-174 (CKNVVDEVIV…LCTIIDKYIG (112 aa)). Cysteines 98 and 101 form a disulfide.

It belongs to the thioredoxin family. Plant M-type subfamily. In terms of assembly, forms a complex with heterodimeric ferredoxin-thioredoxin reductase (FTR) and ferredoxin.

It localises to the plastid. The protein localises to the chloroplast. Functionally, participates in various redox reactions through the reversible oxidation of the active center dithiol to a disulfide. The M form is known to activate NADP-malate dehydrogenase. The sequence is that of Thioredoxin M-type, chloroplastic from Triticum aestivum (Wheat).